A 92-amino-acid chain; its full sequence is Small ribosomal subunit protein uS19 (92 aa).

This sequence belongs to the universal ribosomal protein uS19 family.

Its function is as follows. Protein S19 forms a complex with S13 that binds strongly to the 16S ribosomal RNA. In Rhodopseudomonas palustris (strain HaA2), this protein is Small ribosomal subunit protein uS19.